Here is a 261-residue protein sequence, read N- to C-terminus: uncharacterized protein (261 aa).

A signal peptide spans 1–22 (MIHSKKLTLGICLVLLIILIGG). Cysteine 23 carries N-palmitoyl cysteine lipidation. A lipid anchor (S-diacylglycerol cysteine) is attached at cysteine 23.

This sequence belongs to the staphylococcal tandem lipoprotein family.

Its subcellular location is the cell membrane. This is an uncharacterized protein from Staphylococcus aureus (strain USA300).